The primary structure comprises 142 residues: Sec-independent protein translocase protein TatB (142 aa).

The chain crosses the membrane as a helical span at residues Phe2–Gly22. Positions Asp89–Thr142 are disordered. Basic and acidic residues predominate over residues Gln99–Lys112. A compositionally biased stretch (polar residues) spans Gly133–Thr142.

This sequence belongs to the TatB family. As to quaternary structure, the Tat system comprises two distinct complexes: a TatABC complex, containing multiple copies of TatA, TatB and TatC subunits, and a separate TatA complex, containing only TatA subunits. Substrates initially bind to the TatABC complex, which probably triggers association of the separate TatA complex to form the active translocon.

It localises to the cell membrane. In terms of biological role, part of the twin-arginine translocation (Tat) system that transports large folded proteins containing a characteristic twin-arginine motif in their signal peptide across membranes. Together with TatC, TatB is part of a receptor directly interacting with Tat signal peptides. TatB may form an oligomeric binding site that transiently accommodates folded Tat precursor proteins before their translocation. This chain is Sec-independent protein translocase protein TatB, found in Mycolicibacterium vanbaalenii (strain DSM 7251 / JCM 13017 / BCRC 16820 / KCTC 9966 / NRRL B-24157 / PYR-1) (Mycobacterium vanbaalenii).